Here is a 116-residue protein sequence, read N- to C-terminus: Signal recognition particle 14 kDa protein (116 aa).

The protein belongs to the SRP14 family. As to quaternary structure, heterodimer with ZK512.4/SRP9; binds RNA as heterodimer. Component of a signal recognition particle (SRP) complex that consists of a 7SL RNA molecule of 300 nucleotides and six protein subunits: srpa-72, srpa-68, SRP54, F37F2.2/SRP19, F25G6.8/SRP14 and ZK512.4/SRP9.

It localises to the cytoplasm. Component of the signal recognition particle (SRP) complex, a ribonucleoprotein complex that mediates the cotranslational targeting of secretory and membrane proteins to the endoplasmic reticulum (ER). F37F2.2/srpa-19 together with F25G6.8/srpa-14 and the Alu portion of the SRP RNA, constitutes the elongation arrest domain of SRP. The complex of F37F2.2/srpa-19 and F25G6.8/srpa-14 is required for SRP RNA binding. This chain is Signal recognition particle 14 kDa protein, found in Caenorhabditis elegans.